Here is a 299-residue protein sequence, read N- to C-terminus: Telomere repeat-binding factor 2 (299 aa).

The region spanning 1 to 61 (MGAPKQKWTP…KWRNISVTAL (61 aa)) is the HTH myb-type domain. Positions 28 to 57 (WRTILSDTEFSLILKSRSNVDLKDKWRNIS) form a DNA-binding region, H-T-H motif. Residues 93–116 (LTNDDERAKPTSPGGSGGGSPRTC) are disordered. The region spanning 121–189 (SITSLDKIIF…KIKHKYRFSS (69 aa)) is the H15 domain. Positions 243-288 (EAAEAAARAVAEAEFAITEAEQAAKEAERAEAEAEAAQIFAKAAMK) form a coiled coil.

This sequence belongs to the histone H1/H5 family. SMH subfamily. In terms of assembly, forms a homodimer and heterodimers with TRB1 or TRB3. Interacts with TRB1 and TRB3. As to expression, ubiquitous.

The protein resides in the nucleus. Its subcellular location is the nucleolus. It is found in the chromosome. Functionally, binds preferentially double-stranded telomeric repeats, but it can also bind to the single G-rich telomeric strand. In Arabidopsis thaliana (Mouse-ear cress), this protein is Telomere repeat-binding factor 2 (TRB2).